Reading from the N-terminus, the 537-residue chain is 2-succinyl-5-enolpyruvyl-6-hydroxy-3-cyclohexene-1-carboxylate synthase (537 aa).

Belongs to the TPP enzyme family. MenD subfamily. In terms of assembly, homodimer. It depends on Mg(2+) as a cofactor. The cofactor is Mn(2+). Thiamine diphosphate serves as cofactor.

It catalyses the reaction isochorismate + 2-oxoglutarate + H(+) = 5-enolpyruvoyl-6-hydroxy-2-succinyl-cyclohex-3-ene-1-carboxylate + CO2. It functions in the pathway quinol/quinone metabolism; 1,4-dihydroxy-2-naphthoate biosynthesis; 1,4-dihydroxy-2-naphthoate from chorismate: step 2/7. The protein operates within quinol/quinone metabolism; menaquinone biosynthesis. Functionally, catalyzes the thiamine diphosphate-dependent decarboxylation of 2-oxoglutarate and the subsequent addition of the resulting succinic semialdehyde-thiamine pyrophosphate anion to isochorismate to yield 2-succinyl-5-enolpyruvyl-6-hydroxy-3-cyclohexene-1-carboxylate (SEPHCHC). This is 2-succinyl-5-enolpyruvyl-6-hydroxy-3-cyclohexene-1-carboxylate synthase from Rhodococcus erythropolis (strain PR4 / NBRC 100887).